An 88-amino-acid chain; its full sequence is Small ribosomal subunit protein uS17 (88 aa).

The protein belongs to the universal ribosomal protein uS17 family. As to quaternary structure, part of the 30S ribosomal subunit.

In terms of biological role, one of the primary rRNA binding proteins, it binds specifically to the 5'-end of 16S ribosomal RNA. This is Small ribosomal subunit protein uS17 from Lawsonia intracellularis (strain PHE/MN1-00).